The primary structure comprises 252 residues: Ditrans,polycis-undecaprenyl-diphosphate synthase ((2E,6E)-farnesyl-diphosphate specific) (252 aa).

D25 is an active-site residue. D25 is a binding site for Mg(2+). Substrate-binding positions include 26-29 (GNGR), W30, R38, H42, and 70-72 (SSE). N73 functions as the Proton acceptor in the catalytic mechanism. Positions 74, 76, and 193 each coordinate substrate. Position 198 (H198) interacts with Mg(2+). Position 199–201 (199–201 (RIS)) interacts with substrate. E212 lines the Mg(2+) pocket.

The protein belongs to the UPP synthase family. In terms of assembly, homodimer. The cofactor is Mg(2+).

The enzyme catalyses 8 isopentenyl diphosphate + (2E,6E)-farnesyl diphosphate = di-trans,octa-cis-undecaprenyl diphosphate + 8 diphosphate. Functionally, catalyzes the sequential condensation of isopentenyl diphosphate (IPP) with (2E,6E)-farnesyl diphosphate (E,E-FPP) to yield (2Z,6Z,10Z,14Z,18Z,22Z,26Z,30Z,34E,38E)-undecaprenyl diphosphate (di-trans,octa-cis-UPP). UPP is the precursor of glycosyl carrier lipid in the biosynthesis of bacterial cell wall polysaccharide components such as peptidoglycan and lipopolysaccharide. The protein is Ditrans,polycis-undecaprenyl-diphosphate synthase ((2E,6E)-farnesyl-diphosphate specific) of Salmonella paratyphi A (strain ATCC 9150 / SARB42).